We begin with the raw amino-acid sequence, 265 residues long: Ubiquinone biosynthesis protein COQ4 homolog, mitochondrial (265 aa).

Residues 1–30 (MATLLRPVLRRLCGLPGLQRPAAEMPLRAR) constitute a mitochondrion transit peptide. Serine 108 carries the post-translational modification Phosphoserine. Histidine 163, aspartate 164, histidine 167, and glutamate 179 together coordinate Zn(2+).

This sequence belongs to the COQ4 family. In terms of assembly, component of a multi-subunit COQ enzyme complex, composed of at least COQ3, COQ4, COQ5, COQ6, COQ7 and COQ9. Zn(2+) is required as a cofactor. In terms of tissue distribution, expressed ubiquitously, but at high levels in liver, lung and pancreas.

The protein resides in the mitochondrion inner membrane. The enzyme catalyses 4-hydroxy-3-methoxy-5-(all-trans-decaprenyl)benzoate + H(+) = 2-methoxy-6-(all-trans-decaprenyl)phenol + CO2. The protein operates within cofactor biosynthesis; ubiquinone biosynthesis. Lyase that catalyzes the C1-decarboxylation of 4-hydroxy-3-methoxy-5-(all-trans-decaprenyl)benzoic acid into 2-methoxy-6-(all-trans-decaprenyl)phenol during ubiquinone biosynthesis. In Homo sapiens (Human), this protein is Ubiquinone biosynthesis protein COQ4 homolog, mitochondrial.